A 432-amino-acid polypeptide reads, in one-letter code: MCACAVAGVAVSSLVVPTAESGEMKTKATAPVPQPGPIRKLARKKAKKKFRKSKALAGSGVPGSHPAAVAGRPPKAPENFSQNWKALQELLKQKSQAAEKPLVSQMDDKMHPQIIQQNRKKASDKSKGDKQRTEKAKSTRGSVTSAPTDRKILVPPTDTSGTEQKKGAKKRTYSDISSHQGALKPKWKATEAAVILNQPTPTEEDIWFDDVDPDDIEDAIGPEAAMLVRKRLGQKKRTISLEKEQAFGGLTKALALDCEMVGVGPKGEESIAARVSIVNQYGKCVYDKYVKPTEPVTDYRTAVSGIRPENLKQGEEFEVVKKEVAEMLKGRILVGHALHNDLKVLFLDHPKKKIRDTQKFKPFRSRVKSGRPSLKRLSEKILGIRVQQAEHCSIQDAQAAMRLYVMVKREWESSTANRRAPAATPQHRIKNS.

Positions 42 to 54 are enriched in basic residues; it reads ARKKAKKKFRKSK. Residues 42-177 form a disordered region; it reads ARKKAKKKFR…AKKRTYSDIS (136 aa). A compositionally biased stretch (basic and acidic residues) spans 121–137; sequence KASDKSKGDKQRTEKAK. S123 bears the Phosphoserine mark. K127 is covalently cross-linked (Glycyl lysine isopeptide (Lys-Gly) (interchain with G-Cter in SUMO2)). The 152-residue stretch at 230–381 folds into the Exonuclease domain; sequence KRLGQKKRTI…PSLKRLSEKI (152 aa).

The protein belongs to the REXO4 family. As to quaternary structure, can bind ESR1 and ESR2. This interaction is abrogated by estrogen and augmented by tamoxifen treatment.

Its subcellular location is the nucleus. It is found in the nucleolus. May function as an exonuclease. The polypeptide is RNA exonuclease 4 (Rexo4) (Mus musculus (Mouse)).